We begin with the raw amino-acid sequence, 466 residues long: Myocardial zonula adherens protein (466 aa).

Residues 1–10 are compositionally biased toward polar residues; that stretch reads MLRSTSTVTL. An N-terminal signal peptide occupies residues 1-16; the sequence is MLRSTSTVTLFSGGGA. The segment at 1–68 is disordered; the sequence is MLRSTSTVTL…SNGESTKRLP (68 aa). Residues 45 to 55 show a composition bias toward basic and acidic residues; the sequence is TEKKIERKDQP. 2 coiled-coil regions span residues 95–137 and 187–415; these read NQLK…QDLS and HIKD…LTET.

It belongs to the MYZAP family. In terms of assembly, interacts with DSP, MPRIP and TJP1/ZO1. Interaction with MPRIP inhibits the activation of transcription factor SRF. Interacts with GRIN1. Interacts with DYNLL1. Detected in heart myocardium and lung.

It is found in the cytoplasm. The protein localises to the cytoskeleton. The protein resides in the cell membrane. It localises to the myofibril. Its subcellular location is the sarcomere. It is found in the i band. The protein localises to the z line. The protein resides in the cell junction. Plays a role in cellular signaling via Rho-related GTP-binding proteins and activation of transcription factor SRF. Targets TJP1 to cell junctions. In cortical neurons, may play a role in glutaminergic signal transduction through interaction with the NMDA receptor subunit GRIN1. The polypeptide is Myocardial zonula adherens protein (Myzap) (Mus musculus (Mouse)).